The following is a 170-amino-acid chain: Ribosomal RNA small subunit methyltransferase G (170 aa).

Residues glycine 70, leucine 75, 120–121 (AE), and arginine 138 each bind S-adenosyl-L-methionine.

Belongs to the methyltransferase superfamily. RNA methyltransferase RsmG family.

It is found in the cytoplasm. In terms of biological role, specifically methylates the N7 position of guanine in position 518 of 16S rRNA. In Mycobacterium ulcerans (strain Agy99), this protein is Ribosomal RNA small subunit methyltransferase G.